The sequence spans 159 residues: MAEVANNEQQAPQFNIQRIYTKDVSFETPNSPAVFQKEWNPEVKLDLDTRSTKLADDIFEVVLSVTVTAKNGDETAFLCEVQQAGIFHIGGLTEPQLAHSLGAYCPNILFPYARESVASMVSRGTFPQLNLAPVNFDALFAQYVQQRAAAAQPTEEANA.

This sequence belongs to the SecB family. Homotetramer, a dimer of dimers. One homotetramer interacts with 1 SecA dimer.

It localises to the cytoplasm. In terms of biological role, one of the proteins required for the normal export of preproteins out of the cell cytoplasm. It is a molecular chaperone that binds to a subset of precursor proteins, maintaining them in a translocation-competent state. It also specifically binds to its receptor SecA. This Shewanella amazonensis (strain ATCC BAA-1098 / SB2B) protein is Protein-export protein SecB.